The primary structure comprises 178 residues: C-phycoerythrin class 2 subunit beta (178 aa).

Phycourobilin contacts are provided by Cys-50 and Cys-61. (2R,3E)-phycoerythrobilin is bound by residues Cys-82 and Cys-159.

It belongs to the phycobiliprotein family. In terms of assembly, heterodimer of an alpha and a beta chain. In terms of processing, contains two covalently linked phycoerythrobilin chromophores and one covalently linked phycourobilin chromophore.

The protein localises to the cellular thylakoid membrane. Light-harvesting photosynthetic bile pigment-protein from the phycobiliprotein complex. The polypeptide is C-phycoerythrin class 2 subunit beta (mpeB) (Synechococcus sp. (strain WH8103)).